Consider the following 33-residue polypeptide: Pheromone biosynthesis-activating neuropeptide (33 aa).

Residues 1–33 (LADDMPATMADQEVYRPEPEQIDSRNKYFSPRL) form a disordered region. Positions 13–26 (EVYRPEPEQIDSRN) are enriched in basic and acidic residues. Leu33 carries the leucine amide modification.

The protein belongs to the pyrokinin family.

It is found in the secreted. Its function is as follows. Involved in the control of pheromone production in females. This is Pheromone biosynthesis-activating neuropeptide from Lymantria dispar (Gypsy moth).